Here is a 603-residue protein sequence, read N- to C-terminus: Translation initiation factor IF-2 (603 aa).

The 168-residue stretch at 112-279 (TRPPIITIMG…NINLQAEILD (168 aa)) folds into the tr-type G domain. Positions 121 to 128 (GHVDHGKT) are G1. Position 121-128 (121-128 (GHVDHGKT)) interacts with GTP. Positions 146–150 (GITQH) are G2. The G3 stretch occupies residues 167–170 (DTPG). GTP is bound by residues 167 to 171 (DTPGH) and 221 to 224 (NKMD). The interval 221-224 (NKMD) is G4. Positions 257–259 (SAL) are G5.

This sequence belongs to the TRAFAC class translation factor GTPase superfamily. Classic translation factor GTPase family. IF-2 subfamily.

Its subcellular location is the cytoplasm. Its function is as follows. One of the essential components for the initiation of protein synthesis. Protects formylmethionyl-tRNA from spontaneous hydrolysis and promotes its binding to the 30S ribosomal subunits. Also involved in the hydrolysis of GTP during the formation of the 70S ribosomal complex. This chain is Translation initiation factor IF-2, found in Mycoplasmopsis pulmonis (strain UAB CTIP) (Mycoplasma pulmonis).